A 504-amino-acid polypeptide reads, in one-letter code: Apolipoprotein N-acyltransferase (504 aa).

6 consecutive transmembrane segments (helical) span residues 6–26, 47–67, 83–103, 105–125, 153–173, and 186–206; these read LALT…YALV, ALYG…WVFV, LTAL…WLGV, AGGG…WVVT, IAPV…AGLL, and FALL…KVQW. In terms of domain architecture, CN hydrolase spans 219–457; that stretch reads LQGNVPQDQK…REALTGMMQP (239 aa). Catalysis depends on Glu-258, which acts as the Proton acceptor. Residue Lys-317 is part of the active site. Cys-369 (nucleophile) is an active-site residue. A helical membrane pass occupies residues 465-485; it reads ALWGDWPAIGLCAGIVGICFA.

This sequence belongs to the CN hydrolase family. Apolipoprotein N-acyltransferase subfamily.

Its subcellular location is the cell inner membrane. It catalyses the reaction N-terminal S-1,2-diacyl-sn-glyceryl-L-cysteinyl-[lipoprotein] + a glycerophospholipid = N-acyl-S-1,2-diacyl-sn-glyceryl-L-cysteinyl-[lipoprotein] + a 2-acyl-sn-glycero-3-phospholipid + H(+). The protein operates within protein modification; lipoprotein biosynthesis (N-acyl transfer). Its function is as follows. Catalyzes the phospholipid dependent N-acylation of the N-terminal cysteine of apolipoprotein, the last step in lipoprotein maturation. In Methylococcus capsulatus (strain ATCC 33009 / NCIMB 11132 / Bath), this protein is Apolipoprotein N-acyltransferase.